We begin with the raw amino-acid sequence, 126 residues long: Desulfoferrodoxin (126 aa).

Residues Cys-10, Cys-13, Cys-29, Cys-30, His-49, His-69, His-75, Cys-116, and His-119 each coordinate Fe cation.

The protein belongs to the desulfoferrodoxin family. In terms of assembly, homodimer. Fe(3+) is required as a cofactor. It depends on Cu(2+) as a cofactor.

The enzyme catalyses reduced [rubredoxin] + superoxide + 2 H(+) = oxidized [rubredoxin] + H2O2. Functionally, catalyzes the one-electron reduction of superoxide anion radical to hydrogen peroxide at a nonheme ferrous iron center. Plays a fundamental role in case of oxidative stress via its superoxide detoxification activity. The protein is Desulfoferrodoxin (dfx) of Syntrophotalea carbinolica (strain DSM 2380 / NBRC 103641 / GraBd1) (Pelobacter carbinolicus).